Reading from the N-terminus, the 1162-residue chain is ATP-dependent helicase/deoxyribonuclease subunit B (1162 aa).

The UvrD-like helicase ATP-binding domain occupies 1–275; it reads MELNAYIGRA…QFFKQQYRFN (275 aa). Residue 8–15 coordinates ATP; sequence GRAGTGKS. The 315-residue stretch at 269 to 583 folds into the UvrD-like helicase C-terminal domain; sequence KQQYRFNNKD…SIGTMDLAKV (315 aa). [4Fe-4S] cluster contacts are provided by cysteine 784, cysteine 1117, cysteine 1120, and cysteine 1126.

This sequence belongs to the helicase family. AddB/RexB type 1 subfamily. In terms of assembly, heterodimer of AddA and AddB. It depends on Mg(2+) as a cofactor. [4Fe-4S] cluster serves as cofactor.

The heterodimer acts as both an ATP-dependent DNA helicase and an ATP-dependent, dual-direction single-stranded exonuclease. Recognizes the chi site generating a DNA molecule suitable for the initiation of homologous recombination. The AddB subunit has 5' -&gt; 3' nuclease activity but not helicase activity. In Staphylococcus haemolyticus (strain JCSC1435), this protein is ATP-dependent helicase/deoxyribonuclease subunit B.